Consider the following 193-residue polypeptide: Apoptosis-associated speck-like protein containing a CARD (193 aa).

The region spanning 1–91 (MGRARDAILD…AEQLQTTKEE (91 aa)) is the Pyrin domain. Glycyl lysine isopeptide (Lys-Gly) (interchain with G-Cter in ubiquitin) cross-links involve residues lysine 55 and lysine 172. The region spanning 105–193 (STARTGHFVD…PYLVMDLEQS (89 aa)) is the CARD domain. Phosphoserine is present on serine 193.

As to quaternary structure, self-associates; enforced oligomerization induces apoptosis, NF-kappa-B regulation and interleukin-1 beta secretion. Homooligomers can form disk-like particles of approximately 12 nm diameter and approximately 1 nm height. Component of several inflammasomes containing one pattern recognition receptor/sensor, such as NLRP2, NLRP3, NLRP6, NLRC4, AIM2, MEFV or NOD2, and probably NLRC4 or NLRP12. Major component of the ASC pyroptosome, a 1-2 um supramolecular assembly (one per macrophage cell) which consists of oligomerized PYCARD dimers and CASP1. Interacts with CASP1 (precursor form); the interaction induces activation of CASP1 leading to the processing of interleukin-1 beta; PYCARD competes with RIPK2 for binding to CASP1. Interacts with NLRP3; the interaction requires the homooligomerization of NLRP3. Interacts with NLRP2, NLRC4, MEFV, CARD16, AIM2, NOD2, RIGI, RIPK2, PYDC1, PYDC2, NLRP10, CHUK, IKBKB and BAX. Interacts with CASP8. Component of the AIM2 PANoptosome complex, a multiprotein complex that drives inflammatory cell death (PANoptosis). Post-translationally, phosphorylated. 'Lys-63'-linked polyubiquitination by TRAF3 is critical for speck formation and inflammasome activation. 'Lys-63'-linked deubiquitinated by USP50; a crucial step for NLRP3-mediated inflammasome activation. 'Lys-63'-linked polyubiquitination by PELI1 is also critical for speck formation and inflammasome activation. Deubiquitinated by USP3 that cleaves 'Lys-48'-linked ubiquitin chains and strengthens its stability by blocking proteasomal degradation. Expressed in small intestine, colon, thymus, spleen, brain, heart, skeletal muscle, kidney, lung and liver.

The protein localises to the cytoplasm. Its subcellular location is the inflammasome. The protein resides in the endoplasmic reticulum. It is found in the mitochondrion. It localises to the nucleus. Functionally, functions as a key mediator in apoptosis and inflammation. Promotes caspase-mediated apoptosis involving predominantly caspase-8 and also caspase-9 in a probable cell type-specific manner. Involved in activation of the mitochondrial apoptotic pathway, promotes caspase-8-dependent proteolytic maturation of BID independently of FADD in certain cell types and also mediates mitochondrial translocation of BAX and activates BAX-dependent apoptosis coupled to activation of caspase-9, -2 and -3. Involved in innate immune response by acting as an integral adapter in the assembly of various inflammasomes (NLRP2, NLRP3, NLRP6 and AIM2) which recruit and activate caspase-1 leading to processing and secretion of pro-inflammatory cytokines. Caspase-1-dependent inflammation leads to macrophage pyroptosis, a form of cell death. The function as activating adapter in different types of inflammasomes is mediated by the pyrin and CARD domains and their homotypic interactions. Clustered PYCARD nucleates the formation of caspase-1 filaments through the interaction of their respective CARD domains, acting as a platform for of caspase-1 polymerization. In the NLRC4 inflammasomes seems not be required but facilitates the processing of procaspase-1. In cooperation with NOD2 involved in an inflammasome activated by bacterial muramyl dipeptide leading to caspase-1 activation. May be involved in RIGI-triggered pro-inflammatory responses and inflammasome activation. In collaboration with AIM2 which detects cytosolic double-stranded DNA may also be involved in a caspase-1-independent cell death that involves caspase-8. In adaptive immunity may be involved in maturation of dendritic cells to stimulate T-cell immunity and in cytoskeletal rearrangements coupled to chemotaxis and antigen uptake may be involved in post-transcriptional regulation of the guanine nucleotide exchange factor DOCK2; the latter function is proposed to involve the nuclear form. Also involved in transcriptional activation of cytokines and chemokines independent of the inflammasome; this function may involve AP-1, NF-kappa-B, MAPK and caspase-8 signaling pathways. For regulation of NF-kappa-B activating and inhibiting functions have been reported. Modulates NF-kappa-B induction at the level of the IKK complex by inhibiting kinase activity of CHUK and IKBK. Proposed to compete with RIPK2 for association with CASP1 thereby down-regulating CASP1-mediated RIPK2-dependent NF-kappa-B activation and activating interleukin-1 beta processing. Modulates host resistance to DNA virus infection, probably by inducing the cleavage of and inactivating CGAS in presence of cytoplasmic double-stranded DNA. The polypeptide is Apoptosis-associated speck-like protein containing a CARD (Pycard) (Mus musculus (Mouse)).